The sequence spans 425 residues: Glutamyl-tRNA reductase (425 aa).

Substrate is bound by residues 49-52 (TCNR), serine 109, 114-116 (EGQ), and glutamine 120. Cysteine 50 (nucleophile) is an active-site residue. 189–194 (GAGETG) lines the NADP(+) pocket.

This sequence belongs to the glutamyl-tRNA reductase family. As to quaternary structure, homodimer.

It carries out the reaction (S)-4-amino-5-oxopentanoate + tRNA(Glu) + NADP(+) = L-glutamyl-tRNA(Glu) + NADPH + H(+). The protein operates within porphyrin-containing compound metabolism; protoporphyrin-IX biosynthesis; 5-aminolevulinate from L-glutamyl-tRNA(Glu): step 1/2. It participates in porphyrin-containing compound metabolism; chlorophyll biosynthesis. Functionally, catalyzes the NADPH-dependent reduction of glutamyl-tRNA(Glu) to glutamate 1-semialdehyde (GSA). This chain is Glutamyl-tRNA reductase, found in Pelodictyon phaeoclathratiforme (strain DSM 5477 / BU-1).